The following is a 312-amino-acid chain: MRFKGLDLNLLVALDALMTKRSVTAAARSINLSQPAMSAAIARLRTYFGDDLFTMRGRELIPTPRAIALAPAVRDALLHIQFSIISWDMFNPVQSERRFRIRLSDVMMLVFFERVVKRLAREAPGIGFELLPLTEDPDELLRYGDVDFVILPELFASSDHPKAKLLDDTLVCVGCPTNKQLKRQLSFENYGSMGHIAAKFGRTLKPSIENWLLLEHGLKRRIEVVVPGFSLIPPLLSGTDRIATMPLRLVEHFAKTTPLRVAELPLALPPFAQAVQWPSLHNRDQASIWMRQVLLQEALHMTAPRDSVEYRP.

In terms of domain architecture, HTH lysR-type spans 6 to 63; the sequence is LDLNLLVALDALMTKRSVTAAARSINLSQPAMSAAIARLRTYFGDDLFTMRGRELIPT. The segment at residues 23–42 is a DNA-binding region (H-T-H motif); that stretch reads VTAAARSINLSQPAMSAAIA.

It belongs to the LysR transcriptional regulatory family.

Its function is as follows. Represses the expression of the nodABCIJ-nolO-noeI operon. In Sinorhizobium fredii (strain NBRC 101917 / NGR234), this protein is Nodulation protein D 2 (nodD2).